Reading from the N-terminus, the 396-residue chain is Acetate kinase (396 aa).

Residue Asn-8 participates in Mg(2+) binding. Lys-15 lines the ATP pocket. Arg-89 contributes to the substrate binding site. Catalysis depends on Asp-146, which acts as the Proton donor/acceptor. ATP contacts are provided by residues 206–210 (HIGNG), 283–285 (DMR), and 331–335 (GVGEN). Glu-383 is a Mg(2+) binding site.

This sequence belongs to the acetokinase family. In terms of assembly, homodimer. Mg(2+) serves as cofactor. Mn(2+) is required as a cofactor.

Its subcellular location is the cytoplasm. It carries out the reaction acetate + ATP = acetyl phosphate + ADP. The protein operates within metabolic intermediate biosynthesis; acetyl-CoA biosynthesis; acetyl-CoA from acetate: step 1/2. In terms of biological role, catalyzes the formation of acetyl phosphate from acetate and ATP. Can also catalyze the reverse reaction. The protein is Acetate kinase of Streptococcus pneumoniae (strain ATCC 700669 / Spain 23F-1).